The sequence spans 295 residues: Acetylglutamate kinase (295 aa).

Residues 64 to 65 (GG), arginine 86, and asparagine 190 contribute to the substrate site.

It belongs to the acetylglutamate kinase family. ArgB subfamily.

The protein resides in the cytoplasm. It catalyses the reaction N-acetyl-L-glutamate + ATP = N-acetyl-L-glutamyl 5-phosphate + ADP. The protein operates within amino-acid biosynthesis; L-arginine biosynthesis; N(2)-acetyl-L-ornithine from L-glutamate: step 2/4. Functionally, catalyzes the ATP-dependent phosphorylation of N-acetyl-L-glutamate. This chain is Acetylglutamate kinase, found in Heliobacterium modesticaldum (strain ATCC 51547 / Ice1).